The sequence spans 338 residues: Solute carrier family 35 member G5 (338 aa).

Positions 1 to 27 are disordered; it reads MAGSHPYFNLPDSTHPSPPSAPPSLRW. 9 consecutive transmembrane segments (helical) span residues 37 to 57, 67 to 87, 102 to 122, 160 to 180, 190 to 210, 221 to 241, 250 to 270, 281 to 301, and 305 to 325; these read TNGLLVALLGGGLPAGFVGPL, LPSLELLICRCLFHLPIALLL, GWACFCALLNVLSIGCAYSAV, CGLLGSILGLIIILGPGLWTL, TLGYVQAFLGGLALSLGLLVY, TVAFLSGLVGLLGCVPGLFVL, LLSWSCVGAEGILALVSFTCV, LVCAVLHSEVVVALILQYYML, and VALSDIMGAGVVLGSIAIITA. In terms of domain architecture, EamA 1 spans 49 to 174; that stretch reads LPAGFVGPLS…SILGLIIILG (126 aa). An EamA 2 domain is found at 272–325; the sequence is YAVTKAHPALVCAVLHSEVVVALILQYYMLHETVALSDIMGAGVVLGSIAIITA.

It belongs to the SLC35G solute transporter family. As to expression, expressed in placenta and testis.

It is found in the membrane. The protein is Solute carrier family 35 member G5 (SLC35G5) of Homo sapiens (Human).